The primary structure comprises 410 residues: Imidazolonepropionase (410 aa).

2 residues coordinate Fe(3+): His-73 and His-75. The Zn(2+) site is built by His-73 and His-75. 4-imidazolone-5-propanoate-binding residues include Arg-82, Tyr-145, and His-178. Tyr-145 contributes to the N-formimidoyl-L-glutamate binding site. His-243 is a binding site for Fe(3+). Residue His-243 participates in Zn(2+) binding. 4-imidazolone-5-propanoate is bound at residue Gln-246. Asp-318 provides a ligand contact to Fe(3+). Asp-318 serves as a coordination point for Zn(2+). N-formimidoyl-L-glutamate contacts are provided by Asn-320 and Gly-322. A 4-imidazolone-5-propanoate-binding site is contributed by Ser-323.

It belongs to the metallo-dependent hydrolases superfamily. HutI family. It depends on Zn(2+) as a cofactor. Fe(3+) is required as a cofactor.

Its subcellular location is the cytoplasm. The catalysed reaction is 4-imidazolone-5-propanoate + H2O = N-formimidoyl-L-glutamate. The protein operates within amino-acid degradation; L-histidine degradation into L-glutamate; N-formimidoyl-L-glutamate from L-histidine: step 3/3. Its function is as follows. Catalyzes the hydrolytic cleavage of the carbon-nitrogen bond in imidazolone-5-propanoate to yield N-formimidoyl-L-glutamate. It is the third step in the universal histidine degradation pathway. This chain is Imidazolonepropionase, found in Shewanella baltica (strain OS223).